The following is a 157-amino-acid chain: MIVNYLKNKFYNLLTTMIVLFIFVLSGAIFLTFLGFGLYGLSRILIYFRLGDFTYNRSMYDNLLYYGSYIIFGYFIIFAVEHLMDYFRKMLPENAYFRGATFHLISYTVATTLFYFIIHLNYVYINIDFWVIMVIIGFLYVCKLQFYPESKNLNNRK.

Helical transmembrane passes span 18 to 38 (IVLF…GFGL), 63 to 83 (LLYY…VEHL), 100 to 120 (ATFH…IIHL), and 122 to 142 (YVYI…LYVC).

The protein belongs to the multidrug resistance efflux pump SepA family.

It localises to the cell membrane. Involved in multidrug efflux. The protein is Multidrug resistance efflux pump SepA (sepA) of Staphylococcus aureus (strain bovine RF122 / ET3-1).